Consider the following 203-residue polypeptide: SPbeta prophage-derived uncharacterized lipoprotein YonS (203 aa).

Positions 1–21 (MKLFKKLGILLLITSLILLAA) are cleaved as a signal peptide. Cys-22 carries the N-palmitoyl cysteine lipid modification. A lipid anchor (S-diacylglycerol cysteine) is attached at Cys-22. Low complexity predominate over residues 27-46 (ESSSSSEDTNNATDTNTSES). The interval 27–57 (ESSSSSEDTNNATDTNTSESQDISVNGPEKV) is disordered.

Its subcellular location is the cell membrane. The chain is SPbeta prophage-derived uncharacterized lipoprotein YonS (yonS) from Bacillus subtilis (strain 168).